Consider the following 349-residue polypeptide: S-adenosylmethionine:tRNA ribosyltransferase-isomerase (349 aa).

The protein belongs to the QueA family. As to quaternary structure, monomer.

The protein resides in the cytoplasm. The enzyme catalyses 7-aminomethyl-7-carbaguanosine(34) in tRNA + S-adenosyl-L-methionine = epoxyqueuosine(34) in tRNA + adenine + L-methionine + 2 H(+). It functions in the pathway tRNA modification; tRNA-queuosine biosynthesis. Its function is as follows. Transfers and isomerizes the ribose moiety from AdoMet to the 7-aminomethyl group of 7-deazaguanine (preQ1-tRNA) to give epoxyqueuosine (oQ-tRNA). The protein is S-adenosylmethionine:tRNA ribosyltransferase-isomerase of Flavobacterium psychrophilum (strain ATCC 49511 / DSM 21280 / CIP 103535 / JIP02/86).